The chain runs to 457 residues: Glutamate--tRNA ligase 1 (457 aa).

The short motif at 9 to 19 (PSPTGYIHIGN) is the 'HIGH' region element. Residues 250–254 (GLSKR) carry the 'KMSKS' region motif. Position 253 (Lys253) interacts with ATP.

This sequence belongs to the class-I aminoacyl-tRNA synthetase family. Glutamate--tRNA ligase type 1 subfamily. As to quaternary structure, monomer.

Its subcellular location is the cytoplasm. The catalysed reaction is tRNA(Glu) + L-glutamate + ATP = L-glutamyl-tRNA(Glu) + AMP + diphosphate. Its function is as follows. Catalyzes the attachment of glutamate to tRNA(Glu) in a two-step reaction: glutamate is first activated by ATP to form Glu-AMP and then transferred to the acceptor end of tRNA(Glu). This Brucella ovis (strain ATCC 25840 / 63/290 / NCTC 10512) protein is Glutamate--tRNA ligase 1.